The sequence spans 418 residues: E3 ubiquitin-protein ligase pellino homolog 1 (418 aa).

Residues Ala-13–Asp-200 form the FHA; atypical domain. A Phosphoserine modification is found at Ser-121. At Thr-127 the chain carries Phosphothreonine. Residues Cys-311–Ala-399 form a ring-like domain; necessary for ubiquitination of RIPK3 region.

It belongs to the pellino family. In terms of assembly, interacts with MAP3K7. Upon IL1B treatment, forms a complex with TRAF6, IRAK1, IRAK4 and MYD88; this complex recruits MAP3K7/TAK1, TAB1 and TAB2 to mediate NF-kappa-B activation. Direct binding of SMAD6 to PELI1 prevents the complex formation and hence negatively regulates IL1R-TLR signaling and eventually NF-kappa-B-mediated gene expression. Interacts (via atypical FHA domain) with RIPK3. Binds preferentially to the 'Thr-182' phosphorylated form of RIPK3. Interacts with RIPK1. In terms of processing, phosphorylation by IRAK1 and IRAK4 enhances its E3 ligase activity. Phosphorylated by ATM in response to DNA damage, promoting localization to DNA double-strand breaks (DSBs) and ability to mediate 'Lys-63'-linked ubiquitination of NBN. Sumoylated.

Its subcellular location is the chromosome. It carries out the reaction S-ubiquitinyl-[E2 ubiquitin-conjugating enzyme]-L-cysteine + [acceptor protein]-L-lysine = [E2 ubiquitin-conjugating enzyme]-L-cysteine + N(6)-ubiquitinyl-[acceptor protein]-L-lysine.. It functions in the pathway protein modification; protein ubiquitination. E3 ubiquitin ligase catalyzing the covalent attachment of ubiquitin moieties onto substrate proteins. Involved in the TLR and IL-1 signaling pathways via interaction with the complex containing IRAK kinases and TRAF6. Acts as a positive regulator of inflammatory response in microglia through activation of NF-kappa-B and MAP kinase. Mediates 'Lys-63'-linked polyubiquitination of IRAK1 allowing subsequent NF-kappa-B activation. Conjugates 'Lys-63'-linked ubiquitin chains to the adapter protein ASC/PYCARD, which in turn is crucial for NLRP3 inflammasome activation. Mediates 'Lys-48'-linked polyubiquitination of RIPK3 leading to its subsequent proteasome-dependent degradation; preferentially recognizes and mediates the degradation of the 'Thr-182' phosphorylated form of RIPK3. Negatively regulates necroptosis by reducing RIPK3 expression. Mediates 'Lys-63'-linked ubiquitination of RIPK1. Following phosphorylation by ATM, catalyzes 'Lys-63'-linked ubiquitination of NBN, promoting DNA repair via homologous recombination. Negatively regulates activation of the metabolic mTORC1 signaling pathway by mediating 'Lys-63'-linked ubiquitination of mTORC1-inhibitory protein TSC1 and thereby promoting TSC1/TSC2 complex stability. This chain is E3 ubiquitin-protein ligase pellino homolog 1 (Peli1), found in Mus musculus (Mouse).